Reading from the N-terminus, the 701-residue chain is DNA ligase (701 aa).

NAD(+) is bound by residues Asp-43 to Asp-47, Ser-92 to Leu-93, and Glu-126. The active-site N6-AMP-lysine intermediate is Lys-128. Residues Arg-149, Glu-186, Lys-302, and Lys-326 each contribute to the NAD(+) site. 4 residues coordinate Zn(2+): Cys-417, Cys-420, Cys-440, and Cys-446. Positions Glu-622–Thr-701 constitute a BRCT domain.

The protein belongs to the NAD-dependent DNA ligase family. LigA subfamily. Mg(2+) serves as cofactor. Mn(2+) is required as a cofactor.

It carries out the reaction NAD(+) + (deoxyribonucleotide)n-3'-hydroxyl + 5'-phospho-(deoxyribonucleotide)m = (deoxyribonucleotide)n+m + AMP + beta-nicotinamide D-nucleotide.. DNA ligase that catalyzes the formation of phosphodiester linkages between 5'-phosphoryl and 3'-hydroxyl groups in double-stranded DNA using NAD as a coenzyme and as the energy source for the reaction. It is essential for DNA replication and repair of damaged DNA. In Hyphomonas neptunium (strain ATCC 15444), this protein is DNA ligase.